A 138-amino-acid chain; its full sequence is Small ribosomal subunit protein uS9c (138 aa).

Belongs to the universal ribosomal protein uS9 family.

The protein localises to the plastid. It is found in the chloroplast. The sequence is that of Small ribosomal subunit protein uS9c (rps9) from Phaeodactylum tricornutum (strain CCAP 1055/1).